The following is a 353-amino-acid chain: DNA-directed RNA polymerase subunit alpha (353 aa).

Residues 1–234 (MVQEKVRVST…DLFIPFLHTE (234 aa)) form an alpha N-terminal domain (alpha-NTD) region. An alpha C-terminal domain (alpha-CTD) region spans residues 266 to 353 (KKIALKSIFI…LAQSIYSESG (88 aa)).

Belongs to the RNA polymerase alpha chain family. As to quaternary structure, in plastids the minimal PEP RNA polymerase catalytic core is composed of four subunits: alpha, beta, beta', and beta''. When a (nuclear-encoded) sigma factor is associated with the core the holoenzyme is formed, which can initiate transcription.

The protein resides in the plastid. The protein localises to the chloroplast. It catalyses the reaction RNA(n) + a ribonucleoside 5'-triphosphate = RNA(n+1) + diphosphate. Functionally, DNA-dependent RNA polymerase catalyzes the transcription of DNA into RNA using the four ribonucleoside triphosphates as substrates. This is DNA-directed RNA polymerase subunit alpha from Panax ginseng (Korean ginseng).